The following is a 137-amino-acid chain: MLQPKRTKFRKQFKGRIRGEAKGGSDLNFGTYGLKALQPERITARQIEAARRAMTRHMKRQGRVWIRIFPDLPVTSKPVEVRMGKGKGSVDFWACKVKPGRIMFEIDGVSEPVAREALRLAAMKLPIKTRTVVREDW.

It belongs to the universal ribosomal protein uL16 family. In terms of assembly, part of the 50S ribosomal subunit.

In terms of biological role, binds 23S rRNA and is also seen to make contacts with the A and possibly P site tRNAs. This chain is Large ribosomal subunit protein uL16, found in Dinoroseobacter shibae (strain DSM 16493 / NCIMB 14021 / DFL 12).